We begin with the raw amino-acid sequence, 426 residues long: 26S proteasome regulatory subunit 7 homolog A (426 aa).

Residue 209 to 216 (GPPGTGKT) coordinates ATP. Residues Lys-400 and Lys-415 each participate in a glycyl lysine isopeptide (Lys-Gly) (interchain with G-Cter in ubiquitin) cross-link.

This sequence belongs to the AAA ATPase family. As to quaternary structure, component of the 19S regulatory particle (RP/PA700) base subcomplex of the 26S proteasome. The 26S proteasome is composed of a core protease (CP), known as the 20S proteasome, capped at one or both ends by the 19S regulatory particle (RP/PA700). The RP/PA700 complex is composed of at least 17 different subunits in two subcomplexes, the base and the lid, which form the portions proximal and distal to the 20S proteolytic core, respectively.

It localises to the cytoplasm. Its subcellular location is the nucleus. In terms of biological role, the 26S proteasome is involved in the ATP-dependent degradation of ubiquitinated proteins. The regulatory (or ATPase) complex confers ATP dependency and substrate specificity to the 26S complex. The sequence is that of 26S proteasome regulatory subunit 7 homolog A (RPT1A) from Arabidopsis thaliana (Mouse-ear cress).